A 196-amino-acid chain; its full sequence is GTP cyclohydrolase 1 (196 aa).

Cys86, His89, and Cys157 together coordinate Zn(2+).

The protein belongs to the GTP cyclohydrolase I family. As to quaternary structure, toroid-shaped homodecamer, composed of two pentamers of five dimers.

The catalysed reaction is GTP + H2O = 7,8-dihydroneopterin 3'-triphosphate + formate + H(+). Its pathway is cofactor biosynthesis; 7,8-dihydroneopterin triphosphate biosynthesis; 7,8-dihydroneopterin triphosphate from GTP: step 1/1. The polypeptide is GTP cyclohydrolase 1 (Parabacteroides distasonis (strain ATCC 8503 / DSM 20701 / CIP 104284 / JCM 5825 / NCTC 11152)).